A 461-amino-acid chain; its full sequence is tRNA modification GTPase MnmE (461 aa).

Arg-27, Glu-89, and Arg-128 together coordinate (6S)-5-formyl-5,6,7,8-tetrahydrofolate. Positions Gly-224 to Phe-382 constitute a TrmE-type G domain. Residue Asn-234 coordinates K(+). GTP is bound by residues Asn-234–Ser-239, Thr-253–Thr-259, and Asp-278–Gly-281. Ser-238 serves as a coordination point for Mg(2+). Thr-253, Val-255, and Thr-258 together coordinate K(+). Thr-259 lines the Mg(2+) pocket. Lys-461 contacts (6S)-5-formyl-5,6,7,8-tetrahydrofolate.

The protein belongs to the TRAFAC class TrmE-Era-EngA-EngB-Septin-like GTPase superfamily. TrmE GTPase family. As to quaternary structure, homodimer. Heterotetramer of two MnmE and two MnmG subunits. K(+) serves as cofactor.

It localises to the cytoplasm. Its function is as follows. Exhibits a very high intrinsic GTPase hydrolysis rate. Involved in the addition of a carboxymethylaminomethyl (cmnm) group at the wobble position (U34) of certain tRNAs, forming tRNA-cmnm(5)s(2)U34. This Lactobacillus acidophilus (strain ATCC 700396 / NCK56 / N2 / NCFM) protein is tRNA modification GTPase MnmE.